A 50-amino-acid chain; its full sequence is PhoP/PhoQ regulator MgrB (50 aa).

Over 1 to 4 (MLDL) the chain is Cytoplasmic. The chain crosses the membrane as a helical span at residues 5-27 (NITKLVTTVVIIAACCLFYLLAL). Residues 28–50 (DSYCDQGGTFSTGICAITTIVPW) are Periplasmic-facing.

Belongs to the MgrB family. In terms of assembly, probably interacts with the periplasmic domain of PhoQ.

It is found in the cell inner membrane. In terms of biological role, phoP-regulated transcription is redox-sensitive, being activated when the periplasm becomes more reducing. MgrB acts between DsbA/DsbB and PhoP/PhoQ in this pathway. Represses PhoP/PhoQ signaling, possibly by binding to the periplasmic domain of PhoQ, altering its activity and that of downstream effector PhoP. In Yersinia pestis, this protein is PhoP/PhoQ regulator MgrB.